The sequence spans 435 residues: Putative F-box/kelch-repeat protein At1g20790 (435 aa).

An F-box domain is found at 1–49 (MKRLPLHLLDEILFNLDPKSLGKMRCTNKSINTHISDDPNFKFEYFSRI). Kelch repeat units lie at residues 192 to 238 (PVYV…CTGD) and 280 to 335 (LYWN…LFKP).

The sequence is that of Putative F-box/kelch-repeat protein At1g20790 from Arabidopsis thaliana (Mouse-ear cress).